The primary structure comprises 281 residues: MKYVGAHVSAVGGVENAPVNAHEIGAKAFALFTRNQRQWKSQPLKADSIHLFKERCEAYGYDPGCILPHDSYLINLGNPDAEGLQKSRDAFLDEMTRCEQLGLKMLNFHPGSHLGKMEVDTCLSRIAESINITLAQTSGVCAVIENTAGQGSNLGYTFEQIAYIINEVEDKSRVGVCLDTAHTLAAGYDIKTPEGFAETFRHFDEVVGFSYLRGMHLNDSKKELGSRVDRHESIGKGLMGLDTFRMIMVDPRFDNMPLILETPDEALWPEEIQLLYKQLKS.

His69, His109, Glu145, Asp179, His182, His216, Asp229, His231, and Glu261 together coordinate Zn(2+).

Belongs to the AP endonuclease 2 family. Zn(2+) is required as a cofactor.

The enzyme catalyses Endonucleolytic cleavage to 5'-phosphooligonucleotide end-products.. Functionally, endonuclease IV plays a role in DNA repair. It cleaves phosphodiester bonds at apurinic or apyrimidinic (AP) sites, generating a 3'-hydroxyl group and a 5'-terminal sugar phosphate. In Parabacteroides distasonis (strain ATCC 8503 / DSM 20701 / CIP 104284 / JCM 5825 / NCTC 11152), this protein is Probable endonuclease 4.